Consider the following 488-residue polypeptide: MSERSVGIVATNYHTIEGEFQLEGGHTLKNIRLAYETYGNLNKEKSNAILVCHALTGDAHAAGRHSDDDKKPGWWDDIIGPGKALDTDRYFVLCSNVLGGCKGTTGPASLDPDTGRQYGITFPVITIRDMVNVQKRLIDHMGITTLFAVVGGSMGGMQTLQWCVAYPELVKKAVVIASTAVSSPQQIAFNEVGRNAIISDPDWNGGDYYEGEPPVNGLSTARMIAHITYLSDASMHEKFGRRLQQGESYKFDMSNDFQVGSYLKYQGDTFTGRFDANSYLYATKAVDYFDLSMNGSLAEGLKYVQAKMLVISITSDWLYSPYHSKKIVEGLTVKEHDVSYREIESSYGHDAFLLESGQINYVIHNFLTHTSVADVMTEKVATIREGASIDTAAKVMFEEALTHLPVVNENGCLVGIVTSWDISKAVALKCSKLENIMTRDVLTAFPDEPIVAAAKRMERHSISALPVVDEKNRLIGIIDSEDINRLIG.

Residues 47–355 (NAILVCHALT…SYGHDAFLLE (309 aa)) enclose the AB hydrolase-1 domain. The active-site Nucleophile is serine 153. Residue arginine 222 coordinates substrate. Active-site residues include aspartate 316 and histidine 349. Residue aspartate 350 participates in substrate binding. 2 consecutive CBS domains span residues 376–433 (MTEK…CSKL) and 437–488 (MTRD…RLIG).

The protein belongs to the AB hydrolase superfamily. MetX family. Homodimer.

The protein localises to the cytoplasm. The catalysed reaction is L-homoserine + acetyl-CoA = O-acetyl-L-homoserine + CoA. The protein operates within amino-acid biosynthesis; L-methionine biosynthesis via de novo pathway; O-acetyl-L-homoserine from L-homoserine: step 1/1. Transfers an acetyl group from acetyl-CoA to L-homoserine, forming acetyl-L-homoserine. This is Homoserine O-acetyltransferase from Methanococcoides burtonii (strain DSM 6242 / NBRC 107633 / OCM 468 / ACE-M).